Reading from the N-terminus, the 139-residue chain is NADH-quinone oxidoreductase subunit A (139 aa).

3 helical membrane-spanning segments follow: residues 11–31 (LWPL…MLAL), 70–90 (LIAI…AWAI), and 97–117 (WPGY…LVYL).

The protein belongs to the complex I subunit 3 family. In terms of assembly, NDH-1 is composed of 14 different subunits. Subunits NuoA, H, J, K, L, M, N constitute the membrane sector of the complex.

The protein resides in the cell inner membrane. It carries out the reaction a quinone + NADH + 5 H(+)(in) = a quinol + NAD(+) + 4 H(+)(out). Functionally, NDH-1 shuttles electrons from NADH, via FMN and iron-sulfur (Fe-S) centers, to quinones in the respiratory chain. The immediate electron acceptor for the enzyme in this species is believed to be ubiquinone. Couples the redox reaction to proton translocation (for every two electrons transferred, four hydrogen ions are translocated across the cytoplasmic membrane), and thus conserves the redox energy in a proton gradient. This is NADH-quinone oxidoreductase subunit A from Methylococcus capsulatus (strain ATCC 33009 / NCIMB 11132 / Bath).